The primary structure comprises 375 residues: Chaperone protein DnaJ (375 aa).

Positions 5–70 (DYYEVLGVSR…EKRARYDRFG (66 aa)) constitute a J domain. Residues 136–214 (GDEVTLRIPK…CRGAGQVQDI (79 aa)) form a CR-type zinc finger. Residues Cys-149, Cys-152, Cys-166, Cys-169, Cys-188, Cys-191, Cys-202, and Cys-205 each contribute to the Zn(2+) site. CXXCXGXG motif repeat units lie at residues 149–156 (CPDCSGSG), 166–173 (CPQCGGSG), 188–195 (CSACRGEG), and 202–209 (CPRCRGAG).

This sequence belongs to the DnaJ family. Homodimer. Zn(2+) serves as cofactor.

It is found in the cytoplasm. Participates actively in the response to hyperosmotic and heat shock by preventing the aggregation of stress-denatured proteins and by disaggregating proteins, also in an autonomous, DnaK-independent fashion. Unfolded proteins bind initially to DnaJ; upon interaction with the DnaJ-bound protein, DnaK hydrolyzes its bound ATP, resulting in the formation of a stable complex. GrpE releases ADP from DnaK; ATP binding to DnaK triggers the release of the substrate protein, thus completing the reaction cycle. Several rounds of ATP-dependent interactions between DnaJ, DnaK and GrpE are required for fully efficient folding. Also involved, together with DnaK and GrpE, in the DNA replication of plasmids through activation of initiation proteins. In Oleidesulfovibrio alaskensis (strain ATCC BAA-1058 / DSM 17464 / G20) (Desulfovibrio alaskensis), this protein is Chaperone protein DnaJ.